The sequence spans 316 residues: Beta-ketoacyl-[acyl-carrier-protein] synthase III (316 aa).

Active-site residues include cysteine 112 and histidine 243. The ACP-binding stretch occupies residues glutamine 244 to arginine 248. Residue asparagine 273 is part of the active site.

It belongs to the thiolase-like superfamily. FabH family. In terms of assembly, homodimer.

It localises to the cytoplasm. It carries out the reaction malonyl-[ACP] + acetyl-CoA + H(+) = 3-oxobutanoyl-[ACP] + CO2 + CoA. Its pathway is lipid metabolism; fatty acid biosynthesis. In terms of biological role, catalyzes the condensation reaction of fatty acid synthesis by the addition to an acyl acceptor of two carbons from malonyl-ACP. Catalyzes the first condensation reaction which initiates fatty acid synthesis and may therefore play a role in governing the total rate of fatty acid production. Possesses both acetoacetyl-ACP synthase and acetyl transacylase activities. Its substrate specificity determines the biosynthesis of branched-chain and/or straight-chain of fatty acids. This chain is Beta-ketoacyl-[acyl-carrier-protein] synthase III, found in Actinobacillus pleuropneumoniae serotype 5b (strain L20).